The sequence spans 251 residues: 4-hydroxy-tetrahydrodipicolinate reductase (251 aa).

NAD(+)-binding positions include 8–13, 76–78, and 106–109; these read GAKGRM, GTT, and APNF. His-136 serves as the catalytic Proton donor/acceptor. His-137 contributes to the (S)-2,3,4,5-tetrahydrodipicolinate binding site. The Proton donor role is filled by Lys-140. 146 to 147 contributes to the (S)-2,3,4,5-tetrahydrodipicolinate binding site; it reads GT.

The protein belongs to the DapB family.

It is found in the cytoplasm. The catalysed reaction is (S)-2,3,4,5-tetrahydrodipicolinate + NAD(+) + H2O = (2S,4S)-4-hydroxy-2,3,4,5-tetrahydrodipicolinate + NADH + H(+). The enzyme catalyses (S)-2,3,4,5-tetrahydrodipicolinate + NADP(+) + H2O = (2S,4S)-4-hydroxy-2,3,4,5-tetrahydrodipicolinate + NADPH + H(+). The protein operates within amino-acid biosynthesis; L-lysine biosynthesis via DAP pathway; (S)-tetrahydrodipicolinate from L-aspartate: step 4/4. In terms of biological role, catalyzes the conversion of 4-hydroxy-tetrahydrodipicolinate (HTPA) to tetrahydrodipicolinate. The protein is 4-hydroxy-tetrahydrodipicolinate reductase of Bifidobacterium longum (strain NCC 2705).